The following is an 877-amino-acid chain: Leucine--tRNA ligase (877 aa).

The 'HIGH' region motif lies at 43–53; the sequence is PYPSGRIHMGH. Positions 628–632 match the 'KMSKS' region motif; the sequence is KMSKS. Residue Lys631 coordinates ATP.

It belongs to the class-I aminoacyl-tRNA synthetase family.

Its subcellular location is the cytoplasm. The catalysed reaction is tRNA(Leu) + L-leucine + ATP = L-leucyl-tRNA(Leu) + AMP + diphosphate. This is Leucine--tRNA ligase from Brucella anthropi (strain ATCC 49188 / DSM 6882 / CCUG 24695 / JCM 21032 / LMG 3331 / NBRC 15819 / NCTC 12168 / Alc 37) (Ochrobactrum anthropi).